We begin with the raw amino-acid sequence, 623 residues long: ATP-dependent zinc metalloprotease FtsH (623 aa).

Over M1–R7 the chain is Cytoplasmic. The helical transmembrane segment at P8–Q28 threads the bilayer. Over Q29–P117 the chain is Periplasmic. The helical transmembrane segment at L118 to V138 threads the bilayer. The Cytoplasmic segment spans residues G139 to P623. G214–T221 serves as a coordination point for ATP. H435 lines the Zn(2+) pocket. Residue E436 is part of the active site. Zn(2+)-binding residues include H439 and D511.

This sequence in the central section; belongs to the AAA ATPase family. The protein in the C-terminal section; belongs to the peptidase M41 family. Homohexamer. Requires Zn(2+) as cofactor.

Its subcellular location is the cell inner membrane. Its function is as follows. Acts as a processive, ATP-dependent zinc metallopeptidase for both cytoplasmic and membrane proteins. Plays a role in the quality control of integral membrane proteins. In Pelobacter propionicus (strain DSM 2379 / NBRC 103807 / OttBd1), this protein is ATP-dependent zinc metalloprotease FtsH.